The following is a 76-amino-acid chain: Protein RALF-like 30 (76 aa).

A signal peptide spans 1 to 22 (MKAWVICLMVISIFMMIEPTLA). 2 disulfides stabilise this stretch: C37/C46 and C66/C72.

Belongs to the plant rapid alkalinization factor (RALF) family.

It localises to the secreted. Its function is as follows. Cell signaling peptide that may regulate plant stress, growth, and development. Mediates a rapid alkalinization of extracellular space by mediating a transient increase in the cytoplasmic Ca(2+) concentration leading to a calcium-dependent signaling events through a cell surface receptor and a concomitant activation of some intracellular mitogen-activated protein kinases. In Arabidopsis thaliana (Mouse-ear cress), this protein is Protein RALF-like 30 (RALFL30).